The primary structure comprises 602 residues: CDPK-related protein kinase (602 aa).

A disordered region spans residues 1–59 (MGICVSKPSPEPDLHNHHTSIPVNDTSLPPQDNSIPPKDIAIPAQDNNKPPGKKSPFLP). Over residues 19–34 (TSIPVNDTSLPPQDNS) the composition is skewed to polar residues. A run of 3 repeats spans residues 20–26 (SIPVNDT), 27–33 (SLPPQDN), and 34–40 (SIPPKDI). Positions 20–40 (SIPVNDTSLPPQDNSIPPKDI) are 3 X 7 AA tandem repeats of S-[LI]-P-X-X-D-X. One can recognise a Protein kinase domain in the interval 148 to 410 (FEVGEEVGRG…AAQALCHSWI (263 aa)). ATP is bound by residues 154-162 (VGRGHFGYT) and Lys-180. Asp-276 functions as the Proton acceptor in the catalytic mechanism. EF-hand domains follow at residues 451-486 (VDEL…RNST), 487-527 (DAMK…LEAL), 528-563 (DRWE…LGPS), and 564-602 (IPVH…AKAQ).

The protein belongs to the protein kinase superfamily. CAMK Ser/Thr protein kinase family. CaMK subfamily.

The enzyme catalyses L-seryl-[protein] + ATP = O-phospho-L-seryl-[protein] + ADP + H(+). The catalysed reaction is L-threonyl-[protein] + ATP = O-phospho-L-threonyl-[protein] + ADP + H(+). This is CDPK-related protein kinase (CRK) from Daucus carota (Wild carrot).